The chain runs to 219 residues: 7-cyano-7-deazaguanine synthase (219 aa).

11–21 (FSGGQDSTTCL) contributes to the ATP binding site. 4 residues coordinate Zn(2+): Cys188, Cys196, Cys199, and Cys202.

It belongs to the QueC family. It depends on Zn(2+) as a cofactor.

The catalysed reaction is 7-carboxy-7-deazaguanine + NH4(+) + ATP = 7-cyano-7-deazaguanine + ADP + phosphate + H2O + H(+). It participates in purine metabolism; 7-cyano-7-deazaguanine biosynthesis. Its function is as follows. Catalyzes the ATP-dependent conversion of 7-carboxy-7-deazaguanine (CDG) to 7-cyano-7-deazaguanine (preQ(0)). This is 7-cyano-7-deazaguanine synthase from Glaesserella parasuis serovar 5 (strain SH0165) (Haemophilus parasuis).